Reading from the N-terminus, the 135-residue chain is MLSPKRTRFRKQHRGRMKGISYRGNRICFGRYALQALEPAWITSRQIEAGRRAMTRNVRRGGKIWVRIFPDKPVTVRPTETRMGSGKGSPEYWVAVVKPGRILYEMGGVAENIARKAISIAASKMPIRTQFIISG.

The protein belongs to the universal ribosomal protein uL16 family. Part of the 50S ribosomal subunit.

Its subcellular location is the plastid. It localises to the chloroplast. In Vitis vinifera (Grape), this protein is Large ribosomal subunit protein uL16c.